The primary structure comprises 215 residues: Adenylate kinase (215 aa).

10 to 15 is a binding site for ATP; it reads GAGKGT. Residues 30-59 are NMP; sequence STGDLLRAAVAAGTPLGKEAKAYMDRGELV. AMP contacts are provided by residues Thr31, Arg36, 57 to 59, 85 to 88, and Gln92; these read ELV and GFPR. An LID region spans residues 126-163; that stretch reads GRRTCKSCGQMYNVYYSPSKVEGKCDKCGGELFQRDDD. Position 127 (Arg127) interacts with ATP. Residues Cys130, Cys133, Cys150, and Cys153 each contribute to the Zn(2+) site. 2 residues coordinate AMP: Arg160 and Arg171. An ATP-binding site is contributed by Gly199.

Belongs to the adenylate kinase family. As to quaternary structure, monomer.

The protein resides in the cytoplasm. The catalysed reaction is AMP + ATP = 2 ADP. The protein operates within purine metabolism; AMP biosynthesis via salvage pathway; AMP from ADP: step 1/1. Catalyzes the reversible transfer of the terminal phosphate group between ATP and AMP. Plays an important role in cellular energy homeostasis and in adenine nucleotide metabolism. This Thermodesulfovibrio yellowstonii (strain ATCC 51303 / DSM 11347 / YP87) protein is Adenylate kinase.